Consider the following 218-residue polypeptide: UPF0319 protein swp_2242 (218 aa).

A signal peptide spans 1 to 21 (MRLSQSVLTALLICVNSAAFA).

The protein belongs to the UPF0319 family.

The protein is UPF0319 protein swp_2242 of Shewanella piezotolerans (strain WP3 / JCM 13877).